Here is a 128-residue protein sequence, read N- to C-terminus: MFS18 protein (128 aa).

Residues 1 to 25 (MARSSKMMVAARLLALALAVSTAEA) form the signal peptide. The interval 26-79 (RNIKTTTTEKKDDAVVQPQTFPPFDRLGGGASPAFGGLPGGSIPGSSIPGFSMP) is disordered. Over residues 52-68 (LGGGASPAFGGLPGGSI) the composition is skewed to gly residues. 11 consecutive repeat copies span residues 64 to 67 (PGGS), 64 to 75 (PGGSIPGSSIPG), 69 to 72 (PGSS), 69 to 80 (PGSSIPGFSMPG), 74 to 77 (PGFS), 79 to 82 (PGSG), 81 to 92 (SGSSLPGFSLPG), 86 to 89 (PGFS), 91 to 94 (PGSG), 104 to 107 (PGFS), and 113 to 116 (PGSP). Residues 64–92 (PGGSIPGSSIPGFSMPGSGSSLPGFSLPG) are 3 X approximate tandem repeats. Positions 64 to 116 (PGGSIPGSSIPGFSMPGSGSSLPGFSLPGSGTMPLFGGGSPGFSGFGGMPGSP) are 8 X 4 AA approximate repeats. The segment covering 69 to 79 (PGSSIPGFSMP) has biased composition (low complexity). A compositionally biased stretch (gly residues) spans 99-113 (FGGGSPGFSGFGGMP). A disordered region spans residues 99-128 (FGGGSPGFSGFGGMPGSPTAGSVPEHANKP).

Enhanced expression in male flowers. Accumulates in the glumes and in anther walls, paleas and lemmas of mature florets.

This Zea mays (Maize) protein is MFS18 protein (MFS18).